The primary structure comprises 500 residues: Proline/betaine transporter (500 aa).

The Cytoplasmic portion of the chain corresponds to 1–37 (MLKRKKIKPITLGDVTIIDDGKLRKAITAASLGNAME). The helical transmembrane segment at 38–58 (WFDFGVYGFVAYALGKVFFPG) threads the bilayer. Residues 59-65 (ADPSVQM) are Periplasmic-facing. A helical membrane pass occupies residues 66 to 86 (IAALATFSVPFLIRPLGGLFF). The Cytoplasmic portion of the chain corresponds to 87–97 (GMLGDKYGRQK). A helical membrane pass occupies residues 98–118 (ILAITIVIMSISTFCIGLIPS). At 119-121 (YAT) the chain is on the periplasmic side. The helical transmembrane segment at 122-142 (IGIWAPILLLLCKMAQGFSVG) threads the bilayer. Over 143 to 169 (GEYTGASIFVAEYSPDRKRGFMGSWLD) the chain is Cytoplasmic. The helical transmembrane segment at 170-190 (FGSIAGFVLGAGVVVLISTIV) threads the bilayer. Over 191–194 (GEEN) the chain is Periplasmic. Residues 195–215 (FLEWGWRIPFFIALPLGIIGL) traverse the membrane as a helical segment. Over 216 to 260 (YLRHALEETPAFQQHVDKLEQGDREGLQDGPKVSFKEIATKHWRS) the chain is Cytoplasmic. A helical membrane pass occupies residues 261 to 281 (LLSCIGLVIATNVTYYMLLTY). Over 282-297 (MPSYLSHNLHYSEDHG) the chain is Periplasmic. The helical transmembrane segment at 298–318 (VLIIIAIMIGMLFVQPVMGLL) threads the bilayer. Residues 319–325 (SDRFGRR) are Cytoplasmic-facing. A helical transmembrane segment spans residues 326–346 (PFVIMGSIALFALAIPAFILI). The Periplasmic portion of the chain corresponds to 347 to 350 (NSNV). A helical membrane pass occupies residues 351–371 (IGLIFAGLLMLAVILNCFTGV). The Cytoplasmic segment spans residues 372–390 (MASTLPAMFPTHIRYSALA). A helical transmembrane segment spans residues 391–411 (AAFNISVLIAGLTPTLAAWLV). At 412 to 416 (ESSQD) the chain is on the periplasmic side. The helical transmembrane segment at 417–437 (LMMPAYYLMVIAVIGLITGIS) threads the bilayer. Over 438-500 (MKETANRPLK…LVQQHPRIDE (63 aa)) the chain is Cytoplasmic. Positions 453-498 (ASDIQEAKEILGEHYDNIEQKIDDIDQEIAELQVKRSRLVQQHPRI) form a coiled coil.

This sequence belongs to the major facilitator superfamily. Metabolite:H+ Symporter (MHS) family (TC 2.A.1.6) family.

The protein localises to the cell inner membrane. In terms of biological role, proton symporter that senses osmotic shifts and responds by importing osmolytes such as proline, glycine betaine, stachydrine, pipecolic acid, ectoine and taurine. It is both an osmosensor and an osmoregulator which is available to participate early in the bacterial osmoregulatory response. The chain is Proline/betaine transporter (proP) from Salmonella typhimurium (strain LT2 / SGSC1412 / ATCC 700720).